Here is a 273-residue protein sequence, read N- to C-terminus: Putative carboxypeptidase YodJ (273 aa).

The N-terminal stretch at 1–23 (MKKSGKWFSLAAALSVTAIVGAG) is a signal peptide. Cysteine 24 is lipidated: N-palmitoyl cysteine. A lipid anchor (S-diacylglycerol cysteine) is attached at cysteine 24. Positions 27–58 (SNGDAQKDTKTTAETKQTEQKTADSKKSNTQN) are disordered. The span at 31-53 (AQKDTKTTAETKQTEQKTADSKK) shows a compositional bias: basic and acidic residues.

This sequence belongs to the peptidase M15B family.

Its subcellular location is the cell membrane. The chain is Putative carboxypeptidase YodJ (yodJ) from Bacillus subtilis (strain 168).